The following is an 869-amino-acid chain: Protein translocase subunit SecA (869 aa).

Residues Q85, 103–107 (GEGKT), and D508 contribute to the ATP site.

This sequence belongs to the SecA family. As to quaternary structure, monomer and homodimer. Part of the essential Sec protein translocation apparatus which comprises SecA, SecYEG and auxiliary proteins SecDF. Other proteins may also be involved.

Its subcellular location is the cell membrane. The protein resides in the cytoplasm. It carries out the reaction ATP + H2O + cellular proteinSide 1 = ADP + phosphate + cellular proteinSide 2.. In terms of biological role, part of the Sec protein translocase complex. Interacts with the SecYEG preprotein conducting channel. Has a central role in coupling the hydrolysis of ATP to the transfer of proteins into and across the cell membrane, serving as an ATP-driven molecular motor driving the stepwise translocation of polypeptide chains across the membrane. The protein is Protein translocase subunit SecA of Deinococcus deserti (strain DSM 17065 / CIP 109153 / LMG 22923 / VCD115).